We begin with the raw amino-acid sequence, 904 residues long: DNA mismatch repair protein MutS (904 aa).

654-661 contributes to the ATP binding site; it reads GPNMAGKS.

This sequence belongs to the DNA mismatch repair MutS family.

In terms of biological role, this protein is involved in the repair of mismatches in DNA. It is possible that it carries out the mismatch recognition step. This protein has a weak ATPase activity. The protein is DNA mismatch repair protein MutS of Caulobacter sp. (strain K31).